A 140-amino-acid chain; its full sequence is MGWSFIFLFLLSVTAGVHSEVQLQQSGAELVRAGSSVKMSCKASGYTFTSYGINWVKQRPGQGLEWIGYINPGNGYINYNEKFKGKTTLTVDKSSSTAYMQLRSLTSEDSAVYFCARSHYYGGSYDFDYWGQGTPLTVSS.

The N-terminal stretch at 1 to 19 is a signal peptide; that stretch reads MGWSFIFLFLLSVTAGVHS. Residues 20-139 enclose the Ig-like domain; that stretch reads EVQLQQSGAE…WGQGTPLTVS (120 aa).

This chain is Ig heavy chain V region 93G7, found in Mus musculus (Mouse).